The following is a 252-amino-acid chain: Ditrans,polycis-undecaprenyl-diphosphate synthase ((2E,6E)-farnesyl-diphosphate specific) (252 aa).

Residue aspartate 25 is part of the active site. Position 25 (aspartate 25) interacts with Mg(2+). Substrate-binding positions include glycine 26 to arginine 29, tryptophan 30, arginine 38, histidine 42, and serine 70 to glutamate 72. Catalysis depends on asparagine 73, which acts as the Proton acceptor. Substrate-binding residues include tryptophan 74, arginine 76, and arginine 193. Histidine 198 contacts Mg(2+). Arginine 199–serine 201 contacts substrate. Glutamate 212 contributes to the Mg(2+) binding site.

The protein belongs to the UPP synthase family. In terms of assembly, homodimer. Requires Mg(2+) as cofactor.

The catalysed reaction is 8 isopentenyl diphosphate + (2E,6E)-farnesyl diphosphate = di-trans,octa-cis-undecaprenyl diphosphate + 8 diphosphate. Catalyzes the sequential condensation of isopentenyl diphosphate (IPP) with (2E,6E)-farnesyl diphosphate (E,E-FPP) to yield (2Z,6Z,10Z,14Z,18Z,22Z,26Z,30Z,34E,38E)-undecaprenyl diphosphate (di-trans,octa-cis-UPP). UPP is the precursor of glycosyl carrier lipid in the biosynthesis of bacterial cell wall polysaccharide components such as peptidoglycan and lipopolysaccharide. In Salmonella paratyphi A (strain ATCC 9150 / SARB42), this protein is Ditrans,polycis-undecaprenyl-diphosphate synthase ((2E,6E)-farnesyl-diphosphate specific).